The primary structure comprises 260 residues: Carbonic anhydrase 2 (260 aa).

Residues 3–259 (HHWGYDSHNG…LKSREVRASF (257 aa)) enclose the Alpha-carbonic anhydrase domain. The active-site Proton donor/acceptor is the histidine 64. Histidine 94, histidine 96, and histidine 119 together coordinate Zn(2+). 198–199 (TT) provides a ligand contact to substrate.

It belongs to the alpha-carbonic anhydrase family. Zn(2+) is required as a cofactor.

Its subcellular location is the cytoplasm. The protein localises to the cell membrane. The enzyme catalyses hydrogencarbonate + H(+) = CO2 + H2O. It carries out the reaction urea = cyanamide + H2O. Its activity is regulated as follows. Inhibited by acetazolamide. Its function is as follows. Catalyzes the reversible hydration of carbon dioxide. Can also hydrate cyanamide to urea. This Gallus gallus (Chicken) protein is Carbonic anhydrase 2 (CA2).